A 279-amino-acid polypeptide reads, in one-letter code: HTH-type transcriptional activator RhaS (279 aa).

The region spanning 175-273 (QALLGWLQNN…SQAPKSLRHQ (99 aa)) is the HTH araC/xylS-type domain. DNA-binding regions (H-T-H motif) lie at residues 192-213 (GGLADQFSLPLRTLHRQLKQHT) and 240-263 (ITTIAHACGFSDSNHFSTQFRKAF).

As to quaternary structure, binds DNA as a dimer.

The protein localises to the cytoplasm. Activates expression of the rhaBAD and rhaT operons. In Pectobacterium atrosepticum (strain SCRI 1043 / ATCC BAA-672) (Erwinia carotovora subsp. atroseptica), this protein is HTH-type transcriptional activator RhaS.